The sequence spans 1770 residues: Transposon Ty2-F Gag-Pol polyprotein (1770 aa).

Polar residues-rich tracts occupy residues 1–11 (MESQQLHQNPH), 19–39 (ASVTSKEVPSNQDPLAVSASN), and 49–60 (KVNSQQETTPGT). Disordered stretches follow at residues 1–86 (MESQ…GQYQ) and 359–453 (QHSE…LPDH). Residues 295–397 (ENNINVSDRL…SSKPRAAKAH (103 aa)) form an RNA-binding region. Residues 369–381 (TSPNTTNTKVTTR) are compositionally biased toward low complexity. Composition is skewed to polar residues over residues 399–408 (IATSSKFSRV) and 415–435 (ESTVSSQYLSDDNELSLGQQQ). The active-site For protease activity; shared with dimeric partner is D457. Residues 579–636 (NVNKSKSVNKYPYPLIHRMLGHANFRSIQKSLKKNAVTYLKESDIEWSNASTYQCPDC) are integrase-type zinc finger-like. The Integrase catalytic domain occupies 656 to 831 (ESYEPFQYLH…AGLDITTILP (176 aa)). Residues D667 and D732 each coordinate Mg(2+). Disordered stretches follow at residues 1004-1034 (MGGTVESDTTSPRHSSTFTARNQNRPGSTNE), 1059-1135 (TEEP…KSSK), 1146-1165 (LPLPDLTHKSPTDTSDVSKD), and 1170-1205 (HSRQTNSSLGGMDDSNVLTTTKSKKRSLEDNETEIE). Composition is skewed to polar residues over residues 1009 to 1034 (ESDTTSPRHSSTFTARNQNRPGSTNE) and 1065 to 1082 (QRNSDTNIKYRTTNSTPS). Residues 1151–1165 (LTHKSPTDTSDVSKD) are compositionally biased toward basic and acidic residues. The Bipartite nuclear localization signal motif lies at 1193–1227 (KKRSLEDNETEIEVSRDTWNNKNMRSLEPPRSKKR). Residues 1353 to 1491 (NDYYITQLDI…DILGLEIKYQ (139 aa)) enclose the Reverse transcriptase Ty1/copia-type domain. 6 residues coordinate Mg(2+): D1361, D1442, D1443, D1625, E1667, and D1700. In terms of domain architecture, RNase H Ty1/copia-type spans 1625 to 1767 (DASYGNQPYY…IKTFKLLTNK (143 aa)).

In terms of assembly, the capsid protein forms a homotrimer, from which the VLPs are assembled. The protease is a homodimer, whose active site consists of two apposed aspartic acid residues. Post-translationally, initially, virus-like particles (VLPs) are composed of the structural unprocessed proteins Gag and Gag-Pol, and also contain the host initiator methionine tRNA (tRNA(i)-Met) which serves as a primer for minus-strand DNA synthesis, and a dimer of genomic Ty RNA. Processing of the polyproteins occurs within the particle and proceeds by an ordered pathway, called maturation. First, the protease (PR) is released by autocatalytic cleavage of the Gag-Pol polyprotein, and this cleavage is a prerequisite for subsequent processing at the remaining sites to release the mature structural and catalytic proteins. Maturation takes place prior to the RT reaction and is required to produce transposition-competent VLPs.

The protein resides in the cytoplasm. Its subcellular location is the nucleus. It carries out the reaction DNA(n) + a 2'-deoxyribonucleoside 5'-triphosphate = DNA(n+1) + diphosphate. The enzyme catalyses Endonucleolytic cleavage to 5'-phosphomonoester.. Capsid protein (CA) is the structural component of the virus-like particle (VLP), forming the shell that encapsulates the retrotransposons dimeric RNA genome. The particles are assembled from trimer-clustered units and there are holes in the capsid shells that allow for the diffusion of macromolecules. CA also has nucleocapsid-like chaperone activity, promoting primer tRNA(i)-Met annealing to the multipartite primer-binding site (PBS), dimerization of Ty2 RNA and initiation of reverse transcription. In terms of biological role, the aspartyl protease (PR) mediates the proteolytic cleavages of the Gag and Gag-Pol polyproteins after assembly of the VLP. Functionally, reverse transcriptase/ribonuclease H (RT) is a multifunctional enzyme that catalyzes the conversion of the retro-elements RNA genome into dsDNA within the VLP. The enzyme displays a DNA polymerase activity that can copy either DNA or RNA templates, and a ribonuclease H (RNase H) activity that cleaves the RNA strand of RNA-DNA heteroduplexes during plus-strand synthesis and hydrolyzes RNA primers. The conversion leads to a linear dsDNA copy of the retrotransposon that includes long terminal repeats (LTRs) at both ends. Its function is as follows. Integrase (IN) targets the VLP to the nucleus, where a subparticle preintegration complex (PIC) containing at least integrase and the newly synthesized dsDNA copy of the retrotransposon must transit the nuclear membrane. Once in the nucleus, integrase performs the integration of the dsDNA into the host genome. This chain is Transposon Ty2-F Gag-Pol polyprotein (TY2B-F), found in Saccharomyces cerevisiae (strain ATCC 204508 / S288c) (Baker's yeast).